The chain runs to 267 residues: Undecaprenyl-diphosphatase (267 aa).

The next 8 membrane-spanning stretches (helical) occupy residues methionine 1–isoleucine 21, glutamine 39–phenylalanine 59, alanine 83–methionine 103, leucine 111–valine 131, threonine 144–threonine 164, phenylalanine 189–threonine 209, phenylalanine 218–leucine 238, and methionine 246–methionine 266.

This sequence belongs to the UppP family.

Its subcellular location is the cell inner membrane. The catalysed reaction is di-trans,octa-cis-undecaprenyl diphosphate + H2O = di-trans,octa-cis-undecaprenyl phosphate + phosphate + H(+). Its function is as follows. Catalyzes the dephosphorylation of undecaprenyl diphosphate (UPP). Confers resistance to bacitracin. This chain is Undecaprenyl-diphosphatase, found in Vibrio campbellii (strain ATCC BAA-1116).